Consider the following 411-residue polypeptide: Arginine deiminase (411 aa).

Catalysis depends on C401, which acts as the Amidino-cysteine intermediate.

It belongs to the arginine deiminase family.

The protein resides in the cytoplasm. It catalyses the reaction L-arginine + H2O = L-citrulline + NH4(+). It functions in the pathway amino-acid degradation; L-arginine degradation via ADI pathway; carbamoyl phosphate from L-arginine: step 1/2. The chain is Arginine deiminase from Streptococcus pyogenes serotype M49 (strain NZ131).